The sequence spans 132 residues: Translation initiation factor 5A (132 aa).

Lys-37 is subject to Hypusine.

This sequence belongs to the eIF-5A family.

It is found in the cytoplasm. Functionally, functions by promoting the formation of the first peptide bond. The chain is Translation initiation factor 5A (eif5a) from Methanocaldococcus jannaschii (strain ATCC 43067 / DSM 2661 / JAL-1 / JCM 10045 / NBRC 100440) (Methanococcus jannaschii).